The sequence spans 208 residues: Protein TIC 20-II, chloroplastic (208 aa).

A chloroplast-targeting transit peptide spans 1–49 (MASLCLSLHQTLTNPLSAPRCRPLSLSFPGSSTFSIRPSSRRATALTTR). The next 4 helical transmembrane spans lie at 61 to 83 (VISIASYALPFFNSLQYGRFLFA), 101 to 121 (LYRSVPYASFVAFFGLYLGVV), 134 to 154 (AMQAVTLDVLLAVPVLLTRIL), and 172 to 192 (TGVFVFSFMCFVYGVVSSLLG).

It belongs to the Tic20 family. In terms of assembly, part of the Tic complex. In terms of tissue distribution, expressed in leaves, siliques and roots.

The protein localises to the plastid. It is found in the chloroplast inner membrane. Functionally, may be involved in protein precursor import into chloroplasts. Not redundant with TIC20-I, TIC20-IV or TIC20-V. The polypeptide is Protein TIC 20-II, chloroplastic (TIC20-II) (Arabidopsis thaliana (Mouse-ear cress)).